The following is a 160-amino-acid chain: Deoxyuridine 5'-triphosphate nucleotidohydrolase (160 aa).

Substrate contacts are provided by residues 72–74 (RSG), Asn-85, and 89–91 (TID).

This sequence belongs to the dUTPase family. It depends on Mg(2+) as a cofactor.

It catalyses the reaction dUTP + H2O = dUMP + diphosphate + H(+). The protein operates within pyrimidine metabolism; dUMP biosynthesis; dUMP from dCTP (dUTP route): step 2/2. In terms of biological role, this enzyme is involved in nucleotide metabolism: it produces dUMP, the immediate precursor of thymidine nucleotides and it decreases the intracellular concentration of dUTP so that uracil cannot be incorporated into DNA. The sequence is that of Deoxyuridine 5'-triphosphate nucleotidohydrolase from Methylocella silvestris (strain DSM 15510 / CIP 108128 / LMG 27833 / NCIMB 13906 / BL2).